A 421-amino-acid chain; its full sequence is UDP-N-acetylglucosamine 1-carboxyvinyltransferase (421 aa).

22–23 lines the phosphoenolpyruvate pocket; it reads KN. Residue R91 coordinates UDP-N-acetyl-alpha-D-glucosamine. C115 serves as the catalytic Proton donor. A 2-(S-cysteinyl)pyruvic acid O-phosphothioketal modification is found at C115. Residues 120 to 124, 160 to 163, D305, and I327 contribute to the UDP-N-acetyl-alpha-D-glucosamine site; these read RPVDL and KVSV.

This sequence belongs to the EPSP synthase family. MurA subfamily.

The protein localises to the cytoplasm. The catalysed reaction is phosphoenolpyruvate + UDP-N-acetyl-alpha-D-glucosamine = UDP-N-acetyl-3-O-(1-carboxyvinyl)-alpha-D-glucosamine + phosphate. It participates in cell wall biogenesis; peptidoglycan biosynthesis. Cell wall formation. Adds enolpyruvyl to UDP-N-acetylglucosamine. The chain is UDP-N-acetylglucosamine 1-carboxyvinyltransferase from Photorhabdus laumondii subsp. laumondii (strain DSM 15139 / CIP 105565 / TT01) (Photorhabdus luminescens subsp. laumondii).